The primary structure comprises 1657 residues: Putative serine/threonine-protein kinase/receptor R826 (1657 aa).

The N-terminal stretch at 1–23 is a signal peptide; it reads MRLNSQIVFCIVVVISCLSMIEC. Residues asparagine 153, asparagine 178, asparagine 238, asparagine 255, asparagine 352, asparagine 454, asparagine 476, asparagine 494, and asparagine 596 are each glycosylated (N-linked (GlcNAc...) asparagine; by host). A helical membrane pass occupies residues 742 to 762; the sequence is IILAVVIPIAFIIVCIICILV. One can recognise a Protein kinase 1 domain in the interval 786–1049; that stretch reads LELGEQLGTG…EIMTRLSNLM (264 aa). ATP is bound by residues 792–800 and lysine 813; that span reads LGTGAFGEV. Aspartate 909 acts as the Proton acceptor in catalysis. The tract at residues 1089-1115 is disordered; that stretch reads VQNSYNRTDSYDLGSNNSHSSITSDTN. The Guanylate cyclase domain occupies 1134–1277; the sequence is VVVFTDIISA…PTVTTAAAVT (144 aa). A Protein kinase 2 domain is found at 1399 to 1651; it reads IKMGEQIGLG…DDVIIVLAKF (253 aa). ATP is bound by residues 1405–1413 and lysine 1426; that span reads IGLGSYGVV. Aspartate 1522 serves as the catalytic Proton acceptor.

It is found in the membrane. The catalysed reaction is L-seryl-[protein] + ATP = O-phospho-L-seryl-[protein] + ADP + H(+). The enzyme catalyses L-threonyl-[protein] + ATP = O-phospho-L-threonyl-[protein] + ADP + H(+). The polypeptide is Putative serine/threonine-protein kinase/receptor R826 (Acanthamoeba polyphaga mimivirus (APMV)).